A 27-amino-acid polypeptide reads, in one-letter code: Conotoxin flf14b (27 aa).

Intrachain disulfides connect C6/C26 and C10/C22.

In terms of tissue distribution, expressed by the venom duct.

The protein resides in the secreted. This chain is Conotoxin flf14b, found in Conus anabathrum floridanus (Florida cone).